We begin with the raw amino-acid sequence, 558 residues long: Glucose-6-phosphate isomerase (558 aa).

N-acetylalanine is present on alanine 2. Lysine 12 carries the N6-acetyllysine modification. Lysine 34 is modified (N6-(2-hydroxyisobutyryl)lysine). Serine 107 carries the post-translational modification Phosphoserine. At threonine 109 the chain carries Phosphothreonine. The residue at position 142 (lysine 142) is an N6-acetyllysine. Residue 159–160 (GS) coordinates D-glucose 6-phosphate. A Phosphoserine; by CK2 modification is found at serine 185. 210-215 (SKTFTT) contacts D-glucose 6-phosphate. At threonine 250 the chain carries Phosphothreonine. The D-glucose 6-phosphate site is built by glutamine 354, glutamate 358, and histidine 389. Catalysis depends on glutamate 358, which acts as the Proton donor. Residue histidine 389 is part of the active site. At lysine 454 the chain carries N6-acetyllysine; alternate. Lysine 454 is subject to N6-malonyllysine; alternate. Position 454 is an N6-succinyllysine; alternate (lysine 454). Residue serine 455 is modified to Phosphoserine. A D-glucose 6-phosphate-binding site is contributed by lysine 519. Lysine 519 is a catalytic residue.

This sequence belongs to the GPI family. Homodimer; in the catalytically active form. Monomer in the secreted form. In terms of processing, phosphorylation at Ser-185 by CK2 has been shown to decrease enzymatic activity and may contribute to secretion by a non-classical secretory pathway. ISGylated.

It is found in the cytoplasm. The protein localises to the secreted. It catalyses the reaction alpha-D-glucose 6-phosphate = beta-D-fructose 6-phosphate. The protein operates within carbohydrate degradation; glycolysis; D-glyceraldehyde 3-phosphate and glycerone phosphate from D-glucose: step 2/4. Functionally, in the cytoplasm, catalyzes the conversion of glucose-6-phosphate to fructose-6-phosphate, the second step in glycolysis, and the reverse reaction during gluconeogenesis. Besides it's role as a glycolytic enzyme, also acts as a secreted cytokine: acts as an angiogenic factor (AMF) that stimulates endothelial cell motility. Acts as a neurotrophic factor, neuroleukin, for spinal and sensory neurons. It is secreted by lectin-stimulated T-cells and induces immunoglobulin secretion. This chain is Glucose-6-phosphate isomerase, found in Pongo abelii (Sumatran orangutan).